Here is a 244-residue protein sequence, read N- to C-terminus: Transcriptional activator protein PhzR (244 aa).

The HTH luxR-type domain maps to 177 to 242 (AFNTDVEFSE…QAVSYAVALG (66 aa)). Residues 201 to 220 (SEEIGVIMGVCTDTVNYHHR) constitute a DNA-binding region (H-T-H motif).

This sequence belongs to the autoinducer-regulated transcriptional regulatory protein family.

Functionally, positive regulator of phenazine antibiotic production. May activate the phenazine biosynthetic genes by binding to a DNA sequence upstream of them, or to an intermediate gene which, in turn, interacts with them. This Pseudomonas fluorescens protein is Transcriptional activator protein PhzR (phzR).